A 643-amino-acid polypeptide reads, in one-letter code: Protein RTF1 homolog (643 aa).

2 disordered regions span residues 1–107 (MGDL…YKNE) and 124–262 (ILSE…SDVP). Gly-2 carries the post-translational modification N-acetylglycine. Positions 65 to 77 (KRLEAEREDRAAR) are enriched in basic and acidic residues. Ser-87 carries the post-translational modification Phosphoserine. A compositionally biased stretch (basic and acidic residues) spans 124–157 (ILSERADKKGDKNFTEKLRSKRESEKTPVSKKET). A compositionally biased stretch (low complexity) spans 162-171 (ASRGVRSSAR). Positions 172–188 (SADRAAAKDDALNELRA) are enriched in basic and acidic residues. Residues 225-235 (SSNLSSSSQSD) are compositionally biased toward low complexity. Residues 261-396 (VPTFEDVKEV…KKEAIQRTNS (136 aa)) form the Plus3 domain.

In terms of assembly, component of the nuclear PAF1 complex (PAF1C), which consists of VIP2/ELF7/PAF1, VIP3/SKI8/WDR61, VIP4/LEO1, VIP5/RTF1, VIP6/ELF8/CTR9 and CDC73.

The protein localises to the nucleus. Functionally, component of the PAF1 complex (PAF1C) which is involved in histone modifications such as methylation on histone H3 'Lys-4' (H3K4me3). Involved in regulation of flowering time. Required for the expression of the flowering repressors and FLC and MADS-box genes of the MAF family. Involved in the control of seed dormancy and germination. This is Protein RTF1 homolog from Arabidopsis thaliana (Mouse-ear cress).